Reading from the N-terminus, the 109-residue chain is Phosphoribosyl-ATP pyrophosphatase (109 aa).

This sequence belongs to the PRA-PH family.

The protein localises to the cytoplasm. The catalysed reaction is 1-(5-phospho-beta-D-ribosyl)-ATP + H2O = 1-(5-phospho-beta-D-ribosyl)-5'-AMP + diphosphate + H(+). Its pathway is amino-acid biosynthesis; L-histidine biosynthesis; L-histidine from 5-phospho-alpha-D-ribose 1-diphosphate: step 2/9. This chain is Phosphoribosyl-ATP pyrophosphatase, found in Geobacter metallireducens (strain ATCC 53774 / DSM 7210 / GS-15).